Consider the following 448-residue polypeptide: Trigger factor (448 aa).

The PPIase FKBP-type domain occupies 160–245; sequence GDMLLMKVES…IQEIREEKLP (86 aa).

The protein belongs to the FKBP-type PPIase family. Tig subfamily.

The protein resides in the cytoplasm. The enzyme catalyses [protein]-peptidylproline (omega=180) = [protein]-peptidylproline (omega=0). Functionally, involved in protein export. Acts as a chaperone by maintaining the newly synthesized protein in an open conformation. Functions as a peptidyl-prolyl cis-trans isomerase. The sequence is that of Trigger factor from Dehalococcoides mccartyi (strain ATCC BAA-2266 / KCTC 15142 / 195) (Dehalococcoides ethenogenes (strain 195)).